The following is a 352-amino-acid chain: Lipid storage droplets surface-binding protein 2 (352 aa).

2 disordered regions span residues 1 to 28 (MASA…DQPK) and 298 to 352 (NVEQ…VSSQ). Residues 298-309 (NVEQSGGSSSDA) are compositionally biased toward polar residues. Over residues 315–329 (TTTSTTTTTTTSSTS) the composition is skewed to low complexity.

Belongs to the perilipin family. Ubiquitous expression in early embryos. At stage 5 expression is restricted to the pole cells. At stage 11 expression is seen in the amnioserosa, refined to the fat body and midgut by stage 14. Also seen in the hindgut by the end of embryogenesis. Expression is seen in larval fat body (at protein level).

It is found in the cytoplasm. The protein localises to the lipid droplet. Essential for embryogenesis. Required for normal deposition of neutral lipids in the oocyte. The polypeptide is Lipid storage droplets surface-binding protein 2 (Drosophila melanogaster (Fruit fly)).